An 82-amino-acid chain; its full sequence is Small ribosomal subunit protein bS18 (82 aa).

It belongs to the bacterial ribosomal protein bS18 family. In terms of assembly, part of the 30S ribosomal subunit. Forms a tight heterodimer with protein bS6.

In terms of biological role, binds as a heterodimer with protein bS6 to the central domain of the 16S rRNA, where it helps stabilize the platform of the 30S subunit. The chain is Small ribosomal subunit protein bS18 from Bifidobacterium longum (strain NCC 2705).